A 743-amino-acid polypeptide reads, in one-letter code: Serine-rich coiled-coil domain-containing protein 1 (743 aa).

Disordered stretches follow at residues 1 to 125 and 156 to 175; these read MGDS…SRNK and KSEG…SVKQ. Residues 29 to 56 are compositionally biased toward low complexity; the sequence is LPSSPSSSNTVGVHSSSPSSTNSSSGST. A compositionally biased stretch (polar residues) spans 81–102; the sequence is EPTNQNLSISNGAQPGQSSMQK. Positions 672-713 form a coiled coil; that stretch reads MKDECSMLKLQLKEKDELISQLQEELEKVQHLQKAFASRVDK.

It belongs to the CCSER family.

The sequence is that of Serine-rich coiled-coil domain-containing protein 1 (CCSER1) from Bos taurus (Bovine).